The following is a 350-amino-acid chain: Divinyl chlorophyll a/b light-harvesting protein PcbB (350 aa).

The next 6 helical transmembrane spans lie at 27–47 (FLAA…SFTL), 89–109 (IVVT…GGLM), 141–161 (FILG…VEWA), 202–222 (VMGG…WHIV), 244–264 (LSWA…WCAS), and 305–325 (LTNI…WHAL).

This sequence belongs to the PsbB/PsbC family. IsiA/Pcb subfamily. In terms of assembly, the antenna complex consists of divinyl chlorophylls (a and b) and divinyl chlorophyll a/b binding proteins. Under iron-starvation forms a complex with PSI, consisting of a PSI trimer surrounded by a ring composed of 18 PcbB subunits. Requires divinyl chlorophyll a as cofactor. Divinyl chlorophyll b serves as cofactor.

The protein localises to the cellular thylakoid membrane. The antenna complex functions as a light receptor, it captures and delivers excitation energy to photosystems I. The Prochlorales pcb genes are not related to higher plant LHCs. This is Divinyl chlorophyll a/b light-harvesting protein PcbB (pcbB) from Prochlorococcus marinus (strain MIT 9313).